Consider the following 1485-residue polypeptide: Chromosome partition protein MukB (1485 aa).

ATP is bound at residue 34–41; sequence GGNGAGKS. Coiled coils occupy residues 311 to 480 and 519 to 665; these read EMAR…EAYR and GARL…RLSQ. The segment at 666 to 783 is flexible hinge; the sequence is PGGAEDARLI…SLPLFGRAAR (118 aa). Coiled coils occupy residues 832–1115 and 1209–1265; these read NDPE…QAKA and IDAI…LQSV.

This sequence belongs to the SMC family. MukB subfamily. Homodimerization via its hinge domain. Binds to DNA via its C-terminal region. Interacts, and probably forms a ternary complex, with MukE and MukF via its C-terminal region. The complex formation is stimulated by calcium or magnesium. Interacts with tubulin-related protein FtsZ.

The protein localises to the cytoplasm. Its subcellular location is the nucleoid. Its function is as follows. Plays a central role in chromosome condensation, segregation and cell cycle progression. Functions as a homodimer, which is essential for chromosome partition. Involved in negative DNA supercoiling in vivo, and by this means organize and compact chromosomes. May achieve or facilitate chromosome segregation by condensation DNA from both sides of a centrally located replisome during cell division. The chain is Chromosome partition protein MukB from Edwardsiella ictaluri (strain 93-146).